Reading from the N-terminus, the 327-residue chain is Taste receptor type 2 member 102 (327 aa).

Topologically, residues 1-7 (MEPVIYS) are extracellular. A helical transmembrane segment spans residues 8-28 (FATLLIHVEFIFGNLSNGFIV). Residues 29-46 (LSNFWDWVIKRKLSTIDK) are Cytoplasmic-facing. The helical transmembrane segment at 47–67 (ILLTLAISRITLIWEIYTWFT) threads the bilayer. The Extracellular segment spans residues 68-87 (SVYGPSSFAIGMKLQILYFT). The chain crosses the membrane as a helical span at residues 88-108 (WILSSHFSLWFATALSIFYLL). Residues 109–124 (RIANCSWKIFLYLKWR) lie on the Cytoplasmic side of the membrane. Residues 125–145 (LKQVIVGMLLASLVFLPGILT) form a helical membrane-spanning segment. Residues 146 to 179 (QRTLEERPYRYGGNTSEDSMETDFARFTELILFN) are Extracellular-facing. N-linked (GlcNAc...) asparagine glycans are attached at residues Asn-159 and Asn-179. Residues 180-200 (LTIFSVIPFSLASISFLLLIF) traverse the membrane as a helical segment. At 201-229 (SLWKHLRKMQLSSRGHGDPSTKAHTNALR) the chain is on the cytoplasmic side. Residues 230 to 250 (IMVSFLLLYSIYFLSLLLSWI) traverse the membrane as a helical segment. Topologically, residues 251 to 260 (AQKHHSKLVD) are extracellular. A helical transmembrane segment spans residues 261–281 (IIGIITGLMYPSAHSFILILG). The Cytoplasmic portion of the chain corresponds to 282–327 (NSKLMQTSLWILSHLRCRLKGENILNPSGNQVTSCYIFCIANKSVS).

The protein belongs to the G-protein coupled receptor T2R family.

Its subcellular location is the membrane. Putative taste receptor which may play a role in the perception of bitterness. This chain is Taste receptor type 2 member 102, found in Rattus norvegicus (Rat).